The sequence spans 525 residues: Probable alpha-galactosidase A (525 aa).

The first 17 residues, 1–17, serve as a signal peptide directing secretion; sequence MHPSMTLLAILPPLVRA. A disulfide bond links cysteine 40 and cysteine 72. 3 N-linked (GlcNAc...) asparagine glycosylation sites follow: asparagine 43, asparagine 81, and asparagine 117. Cysteine 120 and cysteine 150 are joined by a disulfide. Aspartate 148 functions as the Nucleophile in the catalytic mechanism. Asparagine 197 carries N-linked (GlcNAc...) asparagine glycosylation. The active-site Proton donor is the aspartate 206. The region spanning 402 to 525 is the Ricin B-type lectin domain; that stretch reads PPDCPMVIPT…GLPSGVDIEA (124 aa). Disulfide bonds link cysteine 422–cysteine 434 and cysteine 459–cysteine 472.

Belongs to the glycosyl hydrolase 27 family.

It is found in the secreted. It carries out the reaction Hydrolysis of terminal, non-reducing alpha-D-galactose residues in alpha-D-galactosides, including galactose oligosaccharides, galactomannans and galactolipids.. Functionally, hydrolyzes a variety of simple alpha-D-galactoside as well as more complex molecules such as oligosaccharides and polysaccharides. This Aspergillus clavatus (strain ATCC 1007 / CBS 513.65 / DSM 816 / NCTC 3887 / NRRL 1 / QM 1276 / 107) protein is Probable alpha-galactosidase A (aglA).